We begin with the raw amino-acid sequence, 313 residues long: Foldase protein PrsA (313 aa).

An N-terminal signal peptide occupies residues 1-20; sequence MKKKLLAGAITLLSVATLAA. Cys21 carries N-palmitoyl cysteine lipidation. A lipid anchor (S-diacylglycerol cysteine) is attached at Cys21. In terms of domain architecture, PpiC spans 143-241; the sequence is TPDVTAQIIR…SQYYIVKLTK (99 aa).

Belongs to the PrsA family.

Its subcellular location is the cell membrane. The catalysed reaction is [protein]-peptidylproline (omega=180) = [protein]-peptidylproline (omega=0). Functionally, plays a major role in protein secretion by helping the post-translocational extracellular folding of several secreted proteins. This chain is Foldase protein PrsA, found in Streptococcus pneumoniae (strain P1031).